The chain runs to 346 residues: Ferredoxin--NADP reductase (346 aa).

FAD is bound by residues glutamate 35, glutamine 43, tyrosine 48, valine 88, phenylalanine 122, aspartate 287, and threonine 327.

Belongs to the ferredoxin--NADP reductase type 2 family. As to quaternary structure, homodimer. FAD is required as a cofactor.

The enzyme catalyses 2 reduced [2Fe-2S]-[ferredoxin] + NADP(+) + H(+) = 2 oxidized [2Fe-2S]-[ferredoxin] + NADPH. This is Ferredoxin--NADP reductase from Oenococcus oeni (strain ATCC BAA-331 / PSU-1).